The sequence spans 173 residues: T-cell surface glycoprotein CD3 delta chain (173 aa).

The first 21 residues, 1–21 (MEHSGILASLILIAVLPQGSP), serve as a signal peptide directing secretion. Residues 22–105 (FKIQVTEYED…CVELDSGTMA (84 aa)) lie on the Extracellular side of the membrane. A disulfide bridge connects residues Cys37 and Cys73. Asn38, Asn55, and Asn74 each carry an N-linked (GlcNAc...) asparagine glycan. Residues 106–126 (GVIFIDLIATLLLALGVYCFA) form a helical membrane-spanning segment. Over 127 to 173 (GHETGRPSGAAEVQALLKNEQLYQPLRDREDTQYSRLGGNWPRNKKS) the chain is Cytoplasmic. In terms of domain architecture, ITAM spans 138-166 (EVQALLKNEQLYQPLRDREDTQYSRLGGN). Residues Tyr149 and Tyr160 each carry the phosphotyrosine modification.

As to quaternary structure, the TCR-CD3 complex is composed of a CD3D/CD3E and a CD3G/CD3E heterodimers that preferentially associate with TCRalpha and TCRbeta, respectively, to form TCRalpha/CD3E/CD3G and TCRbeta/CD3G/CD3E trimers. In turn, the hexamer interacts with CD3Z homodimer to form the TCR-CD3 complex. Alternatively, TCRalpha and TCRbeta can be replaced by TCRgamma and TCRdelta. Interacts with coreceptors CD4 and CD8. Post-translationally, phosphorylated on Tyr residues after T-cell receptor triggering by LCK in association with CD4/CD8.

Its subcellular location is the membrane. Part of the TCR-CD3 complex present on T-lymphocyte cell surface that plays an essential role in adaptive immune response. When antigen presenting cells (APCs) activate T-cell receptor (TCR), TCR-mediated signals are transmitted across the cell membrane by the CD3 chains CD3D, CD3E, CD3G and CD3Z. All CD3 chains contain immunoreceptor tyrosine-based activation motifs (ITAMs) in their cytoplasmic domain. Upon TCR engagement, these motifs become phosphorylated by Src family protein tyrosine kinases LCK and FYN, resulting in the activation of downstream signaling pathways. In addition of this role of signal transduction in T-cell activation, CD3D plays an essential role in thymocyte differentiation. Indeed, participates in correct intracellular TCR-CD3 complex assembly and surface expression. In absence of a functional TCR-CD3 complex, thymocytes are unable to differentiate properly. Interacts with CD4 and CD8 and thus serves to establish a functional link between the TCR and coreceptors CD4 and CD8, which is needed for activation and positive selection of CD4 or CD8 T-cells. In Mus musculus (Mouse), this protein is T-cell surface glycoprotein CD3 delta chain (Cd3d).